We begin with the raw amino-acid sequence, 418 residues long: Gamma-glutamyl phosphate reductase (418 aa).

Belongs to the gamma-glutamyl phosphate reductase family.

It is found in the cytoplasm. The catalysed reaction is L-glutamate 5-semialdehyde + phosphate + NADP(+) = L-glutamyl 5-phosphate + NADPH + H(+). Its pathway is amino-acid biosynthesis; L-proline biosynthesis; L-glutamate 5-semialdehyde from L-glutamate: step 2/2. Its function is as follows. Catalyzes the NADPH-dependent reduction of L-glutamate 5-phosphate into L-glutamate 5-semialdehyde and phosphate. The product spontaneously undergoes cyclization to form 1-pyrroline-5-carboxylate. This Histophilus somni (strain 129Pt) (Haemophilus somnus) protein is Gamma-glutamyl phosphate reductase.